The chain runs to 117 residues: Ribosome-binding factor A (117 aa).

It belongs to the RbfA family. In terms of assembly, monomer. Binds 30S ribosomal subunits, but not 50S ribosomal subunits or 70S ribosomes.

Its subcellular location is the cytoplasm. One of several proteins that assist in the late maturation steps of the functional core of the 30S ribosomal subunit. Associates with free 30S ribosomal subunits (but not with 30S subunits that are part of 70S ribosomes or polysomes). Required for efficient processing of 16S rRNA. May interact with the 5'-terminal helix region of 16S rRNA. This is Ribosome-binding factor A from Bacillus licheniformis (strain ATCC 14580 / DSM 13 / JCM 2505 / CCUG 7422 / NBRC 12200 / NCIMB 9375 / NCTC 10341 / NRRL NRS-1264 / Gibson 46).